The following is a 272-amino-acid chain: MGQRRQTKSQHAKPRTFRTSPVMFEKEIFFDSDEIIDAVGQSKFVLKNLHHYTVHPNLAQYYEPLKPTALQKFLARNRKIQSFTLKVIEYDQDKTLLILTNNPLPCPIDHQGKDVTPKYFSNELLLKESHQHKPTENFFLPLMPQKKNLRSGLKPVFPLMLLEDTKSKREQWFRFSTDNDFKSEGKYSKVYTLRQQKKMYPQLTFASVCKKYMKNDVSKKSGSDSPTSQMIWEPLTLSSLLEKKPTRTAPGESEFRNGRAQQWFIKSATVIK.

The chain is Testis-specific gene 13 protein (TSGA13) from Bos taurus (Bovine).